A 253-amino-acid polypeptide reads, in one-letter code: Ubiquinone/menaquinone biosynthesis C-methyltransferase UbiE (253 aa).

S-adenosyl-L-methionine contacts are provided by residues Thr76, Asp97, and 125-126; that span reads NA.

It belongs to the class I-like SAM-binding methyltransferase superfamily. MenG/UbiE family.

It carries out the reaction a 2-demethylmenaquinol + S-adenosyl-L-methionine = a menaquinol + S-adenosyl-L-homocysteine + H(+). The catalysed reaction is a 2-methoxy-6-(all-trans-polyprenyl)benzene-1,4-diol + S-adenosyl-L-methionine = a 5-methoxy-2-methyl-3-(all-trans-polyprenyl)benzene-1,4-diol + S-adenosyl-L-homocysteine + H(+). It participates in quinol/quinone metabolism; menaquinone biosynthesis; menaquinol from 1,4-dihydroxy-2-naphthoate: step 2/2. Its pathway is cofactor biosynthesis; ubiquinone biosynthesis. Methyltransferase required for the conversion of demethylmenaquinol (DMKH2) to menaquinol (MKH2) and the conversion of 2-polyprenyl-6-methoxy-1,4-benzoquinol (DDMQH2) to 2-polyprenyl-3-methyl-6-methoxy-1,4-benzoquinol (DMQH2). This Bradyrhizobium diazoefficiens (strain JCM 10833 / BCRC 13528 / IAM 13628 / NBRC 14792 / USDA 110) protein is Ubiquinone/menaquinone biosynthesis C-methyltransferase UbiE.